A 250-amino-acid chain; its full sequence is DNA repair protein RecO (250 aa).

The protein belongs to the RecO family.

Involved in DNA repair and RecF pathway recombination. This Rhodopseudomonas palustris (strain TIE-1) protein is DNA repair protein RecO.